The sequence spans 471 residues: Chromosomal replication initiator protein DnaA (471 aa).

The segment at 1 to 91 is domain I, interacts with DnaA modulators; that stretch reads MVDVSETTER…KYWQDESDAV (91 aa). Residues 91 to 133 are domain II; it reads VYSVDICVSDGVGVQPQMAEHPDGAVDGPPVVMVGGTYDHLSS. A domain III, AAA+ region region spans residues 134-352; that stretch reads PLDPRFTFDN…GALNKVVAHS (219 aa). The ATP site is built by Gly180, Gly182, Lys183, and Thr184. The tract at residues 353–471 is domain IV, binds dsDNA; sequence SLVGRSVTIE…DINLLIRMLR (119 aa).

The protein belongs to the DnaA family. Oligomerizes as a right-handed, spiral filament on DNA at oriC.

It localises to the cytoplasm. Plays an essential role in the initiation and regulation of chromosomal replication. ATP-DnaA binds to the origin of replication (oriC) to initiate formation of the DNA replication initiation complex once per cell cycle. Binds the DnaA box (a 9 base pair repeat at the origin) and separates the double-stranded (ds)DNA. Forms a right-handed helical filament on oriC DNA; dsDNA binds to the exterior of the filament while single-stranded (ss)DNA is stabiized in the filament's interior. The ATP-DnaA-oriC complex binds and stabilizes one strand of the AT-rich DNA unwinding element (DUE), permitting loading of DNA polymerase. After initiation quickly degrades to an ADP-DnaA complex that is not apt for DNA replication. Binds acidic phospholipids. This is Chromosomal replication initiator protein DnaA from Anaplasma marginale (strain St. Maries).